A 224-amino-acid chain; its full sequence is MGQKGCPIGFRTAVTKKWRSLWYGNNQEFGKFLIEDVKIREFLKKKPSCQGAAGFVVKRMSGKIEVTIHTARPGLVIGKKGAEVESLKAELKKLTDKDVWVEIAEVKRPELNAQLVADGIAKQIERRVSFRRAMKKALQSVMDAGALGVKVQVSGRLAGAEIARSEWYKNGRVPLHTLRADIDYATASAETTYGIIGIKVWINLGEKKAVPAANHAGAASTAAA.

Residues 39-107 (IREFLKKKPS…DVWVEIAEVK (69 aa)) form the KH type-2 domain.

It belongs to the universal ribosomal protein uS3 family. As to quaternary structure, part of the 30S ribosomal subunit. Forms a tight complex with proteins S10 and S14.

In terms of biological role, binds the lower part of the 30S subunit head. Binds mRNA in the 70S ribosome, positioning it for translation. The protein is Small ribosomal subunit protein uS3 of Chlamydia trachomatis serovar D (strain ATCC VR-885 / DSM 19411 / UW-3/Cx).